Here is a 220-residue protein sequence, read N- to C-terminus: 7-cyano-7-deazaguanine synthase (220 aa).

10 to 20 (FSGGQDSTTCL) is a binding site for ATP. Zn(2+) is bound by residues Cys186, Cys195, Cys198, and Cys201.

The protein belongs to the QueC family. Homodimer. It depends on Zn(2+) as a cofactor.

It carries out the reaction 7-carboxy-7-deazaguanine + NH4(+) + ATP = 7-cyano-7-deazaguanine + ADP + phosphate + H2O + H(+). The protein operates within purine metabolism; 7-cyano-7-deazaguanine biosynthesis. Catalyzes the ATP-dependent conversion of 7-carboxy-7-deazaguanine (CDG) to 7-cyano-7-deazaguanine (preQ(0)). The protein is 7-cyano-7-deazaguanine synthase of Bacillus cereus (strain ATCC 14579 / DSM 31 / CCUG 7414 / JCM 2152 / NBRC 15305 / NCIMB 9373 / NCTC 2599 / NRRL B-3711).